Here is a 450-residue protein sequence, read N- to C-terminus: Probable glycine dehydrogenase (decarboxylating) subunit 1 (450 aa).

The protein belongs to the GcvP family. N-terminal subunit subfamily. The glycine cleavage system is composed of four proteins: P, T, L and H. In this organism, the P 'protein' is a heterodimer of two subunits.

It carries out the reaction N(6)-[(R)-lipoyl]-L-lysyl-[glycine-cleavage complex H protein] + glycine + H(+) = N(6)-[(R)-S(8)-aminomethyldihydrolipoyl]-L-lysyl-[glycine-cleavage complex H protein] + CO2. The glycine cleavage system catalyzes the degradation of glycine. The P protein binds the alpha-amino group of glycine through its pyridoxal phosphate cofactor; CO(2) is released and the remaining methylamine moiety is then transferred to the lipoamide cofactor of the H protein. In Brevibacillus brevis (strain 47 / JCM 6285 / NBRC 100599), this protein is Probable glycine dehydrogenase (decarboxylating) subunit 1.